Consider the following 650-residue polypeptide: Macrolide export ATP-binding/permease protein MacB (650 aa).

In terms of domain architecture, ABC transporter spans 6–244; the sequence is LKLTGITRRF…ASSPEAASSP (239 aa). Position 42 to 49 (42 to 49) interacts with ATP; sequence GASGSGKS. Residues 227–246 are disordered; sequence QTRPEEATASSPEAASSPAT. Over residues 233-246 the composition is skewed to low complexity; that stretch reads ATASSPEAASSPAT. 4 helical membrane passes run 275-295, 523-543, 580-600, and 615-635; these read FLTMLGIIIGIASVVSVVALG, LTLLVSMIALISLLVGGIGVM, LVCLFGGIAGVALSLAIGVLF, and SIIAAFLCSSLIGIIFGFFPA.

This sequence belongs to the ABC transporter superfamily. Macrolide exporter (TC 3.A.1.122) family. In terms of assembly, homodimer. Part of the tripartite efflux system MacAB-TolC, which is composed of an inner membrane transporter, MacB, a periplasmic membrane fusion protein, MacA, and an outer membrane component, TolC. The complex forms a large protein conduit and can translocate molecules across both the inner and outer membranes. Interacts with MacA.

The protein resides in the cell inner membrane. Part of the tripartite efflux system MacAB-TolC. MacB is a non-canonical ABC transporter that contains transmembrane domains (TMD), which form a pore in the inner membrane, and an ATP-binding domain (NBD), which is responsible for energy generation. Confers resistance against macrolides. This Pectobacterium atrosepticum (strain SCRI 1043 / ATCC BAA-672) (Erwinia carotovora subsp. atroseptica) protein is Macrolide export ATP-binding/permease protein MacB.